Here is a 1033-residue protein sequence, read N- to C-terminus: MFGSKRLKNVKEAFKSLKGQNSETPIENSKASFKSKNSKTSTISKDAKSSSSLKIPISSNNKNKIFSLAETNKYGMSSKPIAAAFDFTQNLLAIATVTGEVHIYGQQQVEVVIKLEDRSAIKEMRFVKGIYLVVINAKDTVYVLSLYSQKVLTTVFVPGKITSIDTDASLDWMLIGLQNGSMIVYDIDRDQLSSFKLDNLQKSSFFPAARLSPIVSIQWNPRDIGTVLISYEYVTLTYSLVENEIKQSFIYELPPFAPGGDFSEKTNEKRTPKVIQSLYHPNSLHIITIHEDNSLVFWDANSGHMIMARTVFETEINVPQPDYIRDSSTNAAKISKVYWMCENNPEYTSLLISHKSISRGDNQSLTMIDLGYTPRYSITSYEGMKNYYANPKQMKIFPLPTNVPIVNILPIPRQSPYFAGCHNPGLILLILGNGEIETMLYPSGIFTDKASLFPQNLSWLRPLATTSMAASVPNKLWLGALSAAQNKDYLLKGGVRTKRQKLPAEYGTAFITGHSNGSVRIYDASHGDIQDNASFEVNLSRTLNKAKELAVDKISFAAETLELAVSIETGDVVLFKYEVNQFYSVENRPESGDLEMNFRRFSLNNTNGVLVDVRDRAPTGVRQGFMPSTAVHANKGKTSAINNSNIGFVGIAYAAGSLMLIDRRGPAIIYMENIREISGAQSACVTCIEFVIMEYGDDGYSSILMVCGTDMGEVITYKILPASGGKFDVQLMDITNVTSKGPIHKIDAFSKETKSSCLATIPKMQNLSKGLCIPGIVLITGFDDIRLITLGKSKSTHKGFKYPLAATGLSYISTVEKNNDRKNLTVIITLEINGHLRVFTIPDFKEQMSEHIPFPIAAKYITESSVLRNGDIAIRVSEFQASLFSTVKEQDTLAPVSDTLYINGIRIPYRPQVNSLQWARGTVYCTPAQLNELLGGVNRPASKYKESIIAEGSFSERSSDDNNANHPEHQYTKPTRKGRNSSYGVLRNVSRAVETRWDAVEDRFNDYATAMGETMNEAVEQTGKDVMKGALGF.

The interval 16–45 (SLKGQNSETPIENSKASFKSKNSKTSTISK) is disordered. A compositionally biased stretch (polar residues) spans 18–27 (KGQNSETPIE). The span at 28-45 (NSKASFKSKNSKTSTISK) shows a compositional bias: low complexity. WD repeat units follow at residues 81–114 (IAAA…VVIK), 121–156 (IKEM…TTVF), 161–197 (ITSI…SFKL), 216–249 (SIQW…KQSF), 274–309 (VIQS…IMAR), 333–397 (KISK…MKIF), 405–440 (IVNI…ETML), 464–538 (ATTS…FEVN), 552–631 (DKIS…STAV), 638–673 (TSAI…YMEN), 685–736 (VTCI…DITN), 745–799 (KIDA…THKG), 804–851 (LAAT…MSEH), and 865–888 (SVLR…STVK). A phosphoserine mark is found at Ser-591 and Ser-602. Positions 953–984 (SFSERSSDDNNANHPEHQYTKPTRKGRNSSYG) are disordered.

This sequence belongs to the WD repeat L(2)GL family. In terms of assembly, interacts with MYO2 and SEC9.

Its subcellular location is the cytoplasm. It is found in the cell membrane. Its function is as follows. Acts as an allosteric regulator of polarized exocytosis by promoting the targeted fusion of vesicles with the plasma membrane. Coordinates the spatial and temporal nature of both Rab-dependent tethering and SNARE-dependent membrane fusion of exocytic vesicles with the plasma membrane. Required for targeting of the sodium pumping ATPase ENA1 to the Cell Surface, thus being involved in maintenance of ion homeostasis in cells exposed to NaCl stress. May be involved in the targeting of the myosin proteins to their intrinsic pathways. Multicopy suppressor of RHO3. May also participate in the maintenance of cell polarity and bud growth. The polypeptide is Lethal(2) giant larvae protein homolog SRO7 (SRO7) (Saccharomyces cerevisiae (strain ATCC 204508 / S288c) (Baker's yeast)).